The sequence spans 940 residues: MLPLLGLCFALPLCAGLLEEARSWEDTSDQVGLRIPRQVRLLQRLKTKPLMTEFSVKSTIISRYAFTTVACRMLNRGSEDQEVTFQMQIPAAAFITNFTALIGDKVYQGEITEREKRNGDKVKEKRNKTIEDNGEKGTETFRASAVLPSKDKAAFLLSYEELLQRRLGKYEHVVSVRPQQLVGRLTVEVTVLERPGIAELEVLGLQNSRQRGSGRGPDDSGPPPSTVINQNETFAKVVFKPSVVQQAKIAQNGILGDFIVRYDVNREQSIGDIQVLDGYFVHYFAPKDLPPLPKNVVFVLDSSASMVGTKLRQTKDALFTILHDLRPQDHFNIVGFSNRIKVWKDHLVSVTPNSIRDGKVYIHHMSPSGGTDINGALQRGIQLLNDYVAHNDIEDRSVSLVVFLTDGKPTVGETHTFKILNNTREATRGRVCIFTVGIGADVDFKLLEKLSLENCGLTRRVHEDHDARAQLIGFYDEIRTPLLSDIRVDYPPSLVERATRTLFPNYFNGSEIVIAGKLVDRAMDRLHVEVTASNSKKFVVLKKDVPVEPRKVGIDVSQSPRPRGRGQEEPNHLERLWSYLTLKELLSAWLQSIEEPERERLRQEAQALAVNHHFLIPFTSMTLKSAPRTEAPEAAYGMSSTSMATGPETVMQSLRGTHLQPGPAVKKPYNPRIKISKTSADGDPHFVVDFPLSNLTVCFNIDGEPGHILRLVSDHADSGVTVNGELIGAPAPPNGHKKQRTYFRTITILVNKPERSYLEITPSRVIVDGGDRLVLPCNQSAVVGRRGLEVSVSANASVTISIQGTVAFVVLLHLYKKPAPYQRNHLGFYIANGQGLSSNCHGLLGQFLNQEARLIGLSKSPAHPPVPEAGERSEAVLEVKGRQVPVVWKQRRIYNGEEQVDCWFARNNAAGLIDGEYKGYLAAHPFDSETAFGPGLSQGL.

An N-terminal signal peptide occupies residues 1 to 16 (MLPLLGLCFALPLCAG). In terms of domain architecture, VIT spans 35 to 161 (IPRQVRLLQR…KAAFLLSYEE (127 aa)). N-linked (GlcNAc...) asparagine glycans are attached at residues Asn-97 and Asn-127. Positions 207-227 (NSRQRGSGRGPDDSGPPPSTV) are disordered. Residues Asn-231, Asn-421, Asn-508, Asn-694, Asn-778, and Asn-795 are each glycosylated (N-linked (GlcNAc...) asparagine). In terms of domain architecture, VWFA spans 295 to 478 (NVVFVLDSSA…AQLIGFYDEI (184 aa)).

The protein belongs to the ITIH family.

Its subcellular location is the secreted. In terms of biological role, may act as a tumor suppressor. The sequence is that of Inter-alpha-trypsin inhibitor heavy chain H5 (ITIH5) from Bos taurus (Bovine).